A 1766-amino-acid polypeptide reads, in one-letter code: E3 ubiquitin-protein ligase listerin (1766 aa).

A compositionally biased stretch (basic residues) spans 1 to 11 (MGGKNKQRTKG). Residues 1–20 (MGGKNKQRTKGNVRPSSSGR) are disordered. HEAT repeat units lie at residues 100-138 (KGVL…KVKK), 193-231 (VLQD…SLLA), 292-329 (AEAP…TIED), 335-372 (NARK…KVPP), and 512-549 (EKTL…DEDE). The tract at residues 529-567 (KTATKPNNRKSLKVKFSDEDESERNTENGKITEVRSNSD) is disordered. The span at 551–566 (ERNTENGKITEVRSNS) shows a compositional bias: basic and acidic residues. 6 HEAT repeats span residues 606-644 (EQHL…ESQE), 672-710 (KDMH…KWIV), 916-953 (QVLI…NRTE), 1184-1227 (HLLP…MIRY), 1314-1355 (GIHN…YISK), and 1406-1447 (SKLM…TQEL). The segment at 1715 to 1762 (CMICFSVIHGSNYSLPKKACRTCKKKFHSACLYKWFTSSNKSTCPLCR) adopts an RING-type zinc-finger fold.

The protein belongs to the LTN1 family. As to quaternary structure, component of the ribosome quality control complex (RQC), composed of at least the E3 ubiquitin ligase LTN1 and NEMF associated with the 60S ribosomal subunit. The complex probably also contains TCF25 as well as VCP/p97 and its ubiquitin-binding cofactors.

Its subcellular location is the cytoplasm. It localises to the cytosol. The enzyme catalyses S-ubiquitinyl-[E2 ubiquitin-conjugating enzyme]-L-cysteine + [acceptor protein]-L-lysine = [E2 ubiquitin-conjugating enzyme]-L-cysteine + N(6)-ubiquitinyl-[acceptor protein]-L-lysine.. The protein operates within protein modification; protein ubiquitination. Functionally, E3 ubiquitin-protein ligase component of the ribosome quality control complex (RQC), a ribosome-associated complex that mediates ubiquitination and extraction of incompletely synthesized nascent chains for proteasomal degradation. Within the RQC complex, LTN1 is recruited to stalled 60S ribosomal subunits by NEMF and mediates ubiquitination of stalled nascent chains. Ubiquitination leads to VCP/p97 recruitment for extraction and degradation of the incomplete translation product. The sequence is that of E3 ubiquitin-protein ligase listerin (LTN1) from Gallus gallus (Chicken).